The primary structure comprises 153 residues: Ubiquitin-conjugating enzyme E2 35 (153 aa).

In terms of domain architecture, UBC core spans 5–151; that stretch reads NLPRRIIKET…AKEWTRLYAS (147 aa). The active-site Glycyl thioester intermediate is Cys-89.

The protein belongs to the ubiquitin-conjugating enzyme family. Interacts with yeast and human Mms2, with the RING domain of RGLG2 and with UEV1A, UEV1B, UEV1C and UEV1D. As to expression, ubiquitously expressed at low level. Mainly expressed in the vasculature.

The catalysed reaction is S-ubiquitinyl-[E1 ubiquitin-activating enzyme]-L-cysteine + [E2 ubiquitin-conjugating enzyme]-L-cysteine = [E1 ubiquitin-activating enzyme]-L-cysteine + S-ubiquitinyl-[E2 ubiquitin-conjugating enzyme]-L-cysteine.. The protein operates within protein modification; protein ubiquitination. In terms of biological role, catalyzes the synthesis of non-canonical poly-ubiquitin chains that are linked through 'Lys-63'. This type of poly-ubiquitination does not lead to protein degradation by the proteasome. Mediates transcriptional activation of target genes. Required for postreplication repair of UV-damaged DNA and for adapting root developmental programs to suboptimal availability of iron. The protein is Ubiquitin-conjugating enzyme E2 35 (UBC35) of Arabidopsis thaliana (Mouse-ear cress).